A 417-amino-acid polypeptide reads, in one-letter code: MDLFSSLPDEVLCHILSFLTTKEAALASVVSKRWRNQFALVPNLDIDEEGKREREEILLSFMDFVDNVLALQADSPIKKFSLKCKTGVHPRRLDAWARLGPVLPMLKTLIIDSAWIRCDTIETFLPTFPVLEELSMSINEWPDWDETVTSASLRKLSIFTIGCENFSNPKSISFDIPSLVYFEYYDMVAEDYPKVNLTSVVEARISLLLDQDQIKRGRAPNNDEDDVLLRLRNGWKLMSGIRNVQKLYISLDTLQVLSLCCKSMPVFNNLKLLSVKTAENEGWEGMPVLLRNCPHLETLVFEGLRHFVTNKCGDACDYVSREDKGRSLVSCPVKKLQIKGFRGTIRELEMIKHFLYSFRCLEKVEIYAEEKGRTRTDLEVPGMFELIARMLRLYNEFYSCDVQFLVRSSLDKKWTAQ.

Positions 1–53 (MDLFSSLPDEVLCHILSFLTTKEAALASVVSKRWRNQFALVPNLDIDEEGKRE) constitute an F-box domain.

This Arabidopsis thaliana (Mouse-ear cress) protein is Putative F-box protein At3g58950.